We begin with the raw amino-acid sequence, 392 residues long: Phosphoglycerate kinase (392 aa).

Substrate contacts are provided by residues 19-21 (DFN), arginine 35, 58-61 (HMGR), arginine 117, and arginine 150. ATP-binding positions include lysine 201, glutamate 323, and 349 to 352 (GGDS).

The protein belongs to the phosphoglycerate kinase family. As to quaternary structure, monomer.

The protein resides in the cytoplasm. It carries out the reaction (2R)-3-phosphoglycerate + ATP = (2R)-3-phospho-glyceroyl phosphate + ADP. Its pathway is carbohydrate degradation; glycolysis; pyruvate from D-glyceraldehyde 3-phosphate: step 2/5. In Desulfotalea psychrophila (strain LSv54 / DSM 12343), this protein is Phosphoglycerate kinase.